The primary structure comprises 188 residues: COMM domain-containing protein 1 (188 aa).

The segment at 1 to 122 is sufficient for interaction with SLC12A2; it reads MAAELEGSKC…CWDRGLRSLS (122 aa). Cu cation contacts are provided by His100, Met109, and His133. Residues 117-185 form the COMM domain; the sequence is GLRSLSWRVD…EVEESISTLM (69 aa). Positions 124–188 are required for binding to PtdIns(4,5)P2; sequence RVDGKSQSRH…ESISTLMQPA (65 aa).

It belongs to the COMM domain-containing protein 1 family. Component of the commander complex consisting of the CCC subcomplex and the retriever subcomplex. Component of the CCC (COMMD/CCDC22/CCDC93) subcomplex consisting of COMMD1, COMMD2, COMMD3, COMMD4, COMMD5, COMMD6, COMMD7, COMMD8, COMMD9, COMMD10, CCDC22 and CCDC93; within the complex forms a heterodimer with COMMD6. Interacts with VPS35L; the interaction associates the CCC complex with the retriever complex. Identified in a complex with an E3 ubiquitin ligase complex composed of TCEB1/elongin C, CUL2, SOCS1 and RBX1; in the complex interacts directly with SOCS1 and CUL2. Identified in a complex with NF-kappa-B. Interacts directly with SLC12A2. Interacts directly with ATP7B (via the N-terminal region). Interacts with ATP7A. Interacts with FAM107A; this interaction stabilizes COMMD1 in the nucleus. Interacts with CCS, CDKN2A, RELA, REL, RELB, NFKB1/p105, NFKB2/p100, NFKBIB, SCNN1D, SCNN1B, CFTR, CLU, SGK1, AKT1, CUL1, CUL2, CUL3, CUL4A, CUL4B, CUL5, CUL7, HIF1A. Post-translationally, ubiquitinated; undergoes both 'Lys-63'- and 'Lys-48'-linked polyubiquitination. Ubiquitinated by XIAP, leading to its proteasomal degradation.

The protein localises to the nucleus. It is found in the cytoplasm. The protein resides in the endosome membrane. It localises to the cytoplasmic vesicle. Its subcellular location is the early endosome. The protein localises to the recycling endosome. Functionally, scaffold protein in the commander complex that is essential for endosomal recycling of transmembrane cargos; the commander complex is composed of the CCC subcomplex and the retriever subcomplex. Can modulate activity of cullin-RING E3 ubiquitin ligase (CRL) complexes by displacing CAND1; in vitro promotes CRL E3 activity and dissociates CAND1 from CUL1 and CUL2. Promotes ubiquitination of NF-kappa-B subunit RELA and its subsequent proteasomal degradation. Down-regulates NF-kappa-B activity. Involved in the regulation of membrane expression and ubiquitination of SLC12A2. Modulates Na(+) transport in epithelial cells by regulation of apical cell surface expression of amiloride-sensitive sodium channel (ENaC) subunits and by promoting their ubiquitination presumably involving NEDD4L. Promotes the localization of SCNN1D to recycling endosomes. Promotes CFTR cell surface expression through regulation of its ubiquitination. Down-regulates SOD1 activity by interfering with its homodimerization. Plays a role in copper ion homeostasis. Involved in copper-dependent ATP7A trafficking between the trans-Golgi network and vesicles in the cell periphery; the function is proposed to depend on its association within the CCC complex and cooperation with the WASH complex on early endosomes. Can bind one copper ion per monomer. May function to facilitate biliary copper excretion within hepatocytes. Binds to phosphatidylinositol 4,5-bisphosphate (PtdIns(4,5)P2). Involved in the regulation of HIF1A-mediated transcription; competes with ARNT/Hif-1-beta for binding to HIF1A resulting in decreased DNA binding and impaired transcriptional activation by HIF-1. Negatively regulates neuroblastoma G1/S phase cell cycle progression and cell proliferation by stimulating ubiquitination of NF-kappa-B subunit RELA and NF-kappa-B degradation in a FAM107A- and actin-dependent manner. This chain is COMM domain-containing protein 1 (COMMD1), found in Bos taurus (Bovine).